An 855-amino-acid polypeptide reads, in one-letter code: Cytosolic phospholipase A2 zeta (855 aa).

Residues 27 to 145 enclose the C2 domain; sequence EKSEPQWKHR…QLGQPCTKNF (119 aa). Ca(2+)-binding residues include Asp60, Asp66, Asp116, Asp118, and Asp123. The region spanning 304–855 is the PLA2c domain; sequence MSSSGDLDLR…RRQAGGRVGG (552 aa). Ser393 functions as the Nucleophile in the catalytic mechanism. Asp685 acts as the Proton acceptor in catalysis.

Ca(2+) serves as cofactor. Strongly expressed in thyroid, expressed at intermediate level in stomach and at very low level in large intestine and prostate.

It localises to the cytoplasm. The protein localises to the cytosol. Its subcellular location is the cell membrane. The protein resides in the mitochondrion. The catalysed reaction is a 1,2-diacyl-sn-glycero-3-phosphocholine + H2O = a 1-acyl-sn-glycero-3-phosphocholine + a fatty acid + H(+). It carries out the reaction a 1-O-alkyl-2-acyl-sn-glycero-3-phosphocholine + H2O = a 1-O-alkyl-sn-glycero-3-phosphocholine + a fatty acid + H(+). It catalyses the reaction 1-hexadecanoyl-2-(9Z-octadecenoyl)-sn-glycero-3-phosphocholine + H2O = 2-(9Z-octadecenoyl)-sn-glycero-3-phosphocholine + hexadecanoate + H(+). The enzyme catalyses 1-hexadecanoyl-2-(9Z,12Z-octadecadienoyl)-sn-glycero-3-phosphocholine + H2O = (9Z,12Z)-octadecadienoate + 1-hexadecanoyl-sn-glycero-3-phosphocholine + H(+). The catalysed reaction is 1-hexadecanoyl-2-(5Z,8Z,11Z,14Z-eicosatetraenoyl)-sn-glycero-3-phosphocholine + H2O = 1-hexadecanoyl-sn-glycero-3-phosphocholine + (5Z,8Z,11Z,14Z)-eicosatetraenoate + H(+). It carries out the reaction 1-hexadecanoyl-2-(9Z,12Z-octadecadienoyl)-sn-glycero-3-phosphoethanolamine + H2O = 1-hexadecanoyl-sn-glycero-3-phosphoethanolamine + (9Z,12Z)-octadecadienoate + H(+). It catalyses the reaction 1-hexadecanoyl-2-(5Z,8Z,11Z,14Z-eicosatetraenoyl)-sn-glycero-3-phosphoethanolamine + H2O = 1-hexadecanoyl-sn-glycero-3-phosphoethanolamine + (5Z,8Z,11Z,14Z)-eicosatetraenoate + H(+). The enzyme catalyses 1-(5Z,8Z,11Z,14Z-eicosatetraenoyl)-2-O-hexadecyl-sn-glycero-3-phosphocholine + H2O = 2-O-hexadecyl-sn-glycero-3-phosphocholine + (5Z,8Z,11Z,14Z)-eicosatetraenoate + H(+). The catalysed reaction is 1-O-hexadecyl-2-(5Z,8Z,11Z,14Z)-eicosatetraenoyl-sn-glycero-3-phosphocholine + H2O = 1-O-hexadecyl-sn-glycero-3-phosphocholine + (5Z,8Z,11Z,14Z)-eicosatetraenoate + H(+). It carries out the reaction 1-hexadecanoyl-sn-glycero-3-phosphocholine + H2O = sn-glycerol 3-phosphocholine + hexadecanoate + H(+). Its activity is regulated as follows. Stimulated by cytosolic Ca(2+). Has calcium-dependent phospholipase and lysophospholipase activities with a potential role in membrane lipid remodeling and biosynthesis of lipid mediators. Preferentially hydrolyzes the ester bond of the fatty acyl group attached at sn-2 position of phospholipids (phospholipase A2 activity). Selectively hydrolyzes sn-2 arachidonoyl group from membrane phospholipids, providing the precursor for eicosanoid biosynthesis. In myocardial mitochondria, plays a major role in arachidonate release that is metabolically channeled to the formation of cardioprotective eicosanoids, epoxyeicosatrienoates (EETs). This chain is Cytosolic phospholipase A2 zeta (Pla2g4f), found in Mus musculus (Mouse).